The chain runs to 290 residues: MIDLSTRWPSPAKLNLFLYINGRTENGYHELQTLFQFVDHGDELTIQANDSGEITISPEIEGVPLKDNLIWKAATALQRFANCSYGAHIDLHKILPMGGGIGGGSSNAATALVALNYLWQTNLSDDELAEIGLALGADVPVFVRGFSAFAEGVGEKLSPAHPDEKWYLVVRPNVSIATADIFGHPDLTRNTPKRDLETLLNTPSVNDCEKIVRMLYPEVDKQLSWLLQYAPSRLTGTGSCVFAEFSSKSEAETILAQLSDKVSAFVAQGRNISPLKETLAEYQSASHRPI.

The active site involves Lys-13. Pro-96–Ser-106 contacts ATP. Residue Asp-138 is part of the active site.

This sequence belongs to the GHMP kinase family. IspE subfamily.

It carries out the reaction 4-CDP-2-C-methyl-D-erythritol + ATP = 4-CDP-2-C-methyl-D-erythritol 2-phosphate + ADP + H(+). Its pathway is isoprenoid biosynthesis; isopentenyl diphosphate biosynthesis via DXP pathway; isopentenyl diphosphate from 1-deoxy-D-xylulose 5-phosphate: step 3/6. In terms of biological role, catalyzes the phosphorylation of the position 2 hydroxy group of 4-diphosphocytidyl-2C-methyl-D-erythritol. This chain is 4-diphosphocytidyl-2-C-methyl-D-erythritol kinase, found in Vibrio campbellii (strain ATCC BAA-1116).